The chain runs to 418 residues: Voltage-gated ClC-type chloride channel ClcB (418 aa).

10 helical membrane passes run 5–25 (LLIA…FRHA), 54–74 (LLTP…WQKF), 146–166 (LWIA…PLAG), 168–188 (LFIA…PVII), 222–242 (ALII…LTLM), 258–278 (WQLA…PAVW), 291–311 (APPL…AVLA), 316–336 (GAPG…GMLY), 352–372 (LLLG…APIM), and 380–400 (MTGE…ASVI).

This sequence belongs to the chloride channel (TC 2.A.49) family. ClcB subfamily.

It localises to the cell inner membrane. Probably acts as an electrical shunt for an outwardly-directed proton pump that is linked to amino acid decarboxylation, as part of the extreme acid resistance (XAR) response. The chain is Voltage-gated ClC-type chloride channel ClcB from Escherichia coli O127:H6 (strain E2348/69 / EPEC).